The sequence spans 117 residues: UPF0344 protein GTNG_0604 (117 aa).

4 helical membrane passes run M1–S21, L39–S59, L61–V81, and V97–F117.

The protein belongs to the UPF0344 family.

The protein localises to the cell membrane. The protein is UPF0344 protein GTNG_0604 of Geobacillus thermodenitrificans (strain NG80-2).